Reading from the N-terminus, the 441-residue chain is Acetyltransferase TRI7 (441 aa).

A run of 7 helical transmembrane segments spans residues 14 to 34 (GILYYTSTLLAVCTYAALIII), 75 to 95 (SLTLALTALFILQCCNFLVLT), 158 to 178 (IWFILRQSLIVAWQCLLLDII), 306 to 326 (IAFVFLGSAVVHMAIDSFCWG), 336 to 356 (LAFFGSLVVGIIIEDTIQALC), 377 to 397 (LVGYIWVSFWFMMTSPWYLYH), and 421 to 441 (TATMLLFGSGVILKFAIGIEV).

It belongs to the wax synthase family.

It is found in the membrane. It participates in sesquiterpene biosynthesis; trichothecene biosynthesis. Its function is as follows. Acetyltransferase; part of the core gene cluster that mediates the biosynthesis of trichothecenes, a very large family of chemically related bicyclic sesquiterpene compounds acting as mycotoxins, including T2-toxin. The biosynthesis of trichothecenes begins with the cyclization of farnesyl diphosphate to trichodiene and is catalyzed by the trichodiene synthase TRI5. Trichodiene undergoes a series of oxygenations catalyzed by the cytochrome P450 monooxygenase TRI4. TRI4 controls the addition of four oxygens at C-2, C-3, C-11, and the C-12, C-13-epoxide to form the intermediate isotrichotriol. Isotrichotriol then undergoes a non-enzymatic isomerization and cyclization to form isotrichodermol. During this process, the oxygen at the C-2 position becomes the pyran ring oxygen and the hydroxyl group at C-11 is lost. More complex type A trichothecenes are built by modifying isotrichodermol through a series of paired hydroxylation and acetylation or acylation steps. Isotrichodermol is converted to isotrichodermin by the acetyltransferase TRI101. TRI101 encodes a C-3 transacetylase that acts as a self-protection or resistance factor during biosynthesis and that the presence of a free C-3 hydroxyl group is a key component of Fusarium trichothecene phytotoxicity. A second hydroxyl group is added to C-15 by the trichothecene C-15 hydroxylase TRI11, producing 15-decalonectrin, which is then acetylated by TRI3, producing calonectrin. A third hydroxyl group is added at C-4 by the cytochrome P450 monooxygenase TRI13, converting calonectrin to 3,15-diacetoxyspirpenol, which is subsequently acetylated by the acetyltransferase TRI7. A fourth hydroxyl group is added to C-8 by the cytochrome P450 monooxygenase TRI1, followed by the addition of an isovaleryl moiety by TRI16. Finally, the acetyl group is removed from the C-3 position by the trichothecene C-3 esterase TRI8 to produce T-2 toxin. In Fusarium sporotrichioides, this protein is Acetyltransferase TRI7.